Reading from the N-terminus, the 207-residue chain is Fibroblast growth factor 18 (207 aa).

The first 27 residues, 1–27, serve as a signal peptide directing secretion; the sequence is MYSAPSACTCLCLHFLLLCFQVQVLVA. The N-linked (GlcNAc...) asparagine glycan is linked to Asn39. A disulfide bridge links Cys109 with Cys127. Asn137 carries an N-linked (GlcNAc...) asparagine glycan. Positions 157 to 186 are disordered; that stretch reads GRPRKGPKTRENQQDVHFMKRYPKGQPELQ. Residues 164–174 are compositionally biased toward basic and acidic residues; the sequence is KTRENQQDVHF.

This sequence belongs to the heparin-binding growth factors family. As to quaternary structure, interacts with FGFR3 and FGFR4.

The protein localises to the secreted. Its function is as follows. Plays an important role in the regulation of cell proliferation, cell differentiation and cell migration. Required for normal ossification and bone development. Stimulates hepatic and intestinal proliferation. This Homo sapiens (Human) protein is Fibroblast growth factor 18 (FGF18).